Here is a 122-residue protein sequence, read N- to C-terminus: Alpha-amylase/trypsin inhibitor (122 aa).

Intrachain disulfides connect Cys-6–Cys-55, Cys-20–Cys-44, Cys-29–Cys-85, Cys-45–Cys-103, and Cys-57–Cys-114.

It belongs to the protease inhibitor I6 (cereal trypsin/alpha-amylase inhibitor) family. As to expression, seeds.

The protein localises to the secreted. Functionally, may play a protective role against endo- and exogenous hydrolytic activities in the Ragi seeds. This is Alpha-amylase/trypsin inhibitor from Eleusine coracana (Indian finger millet).